A 424-amino-acid polypeptide reads, in one-letter code: Serine--tRNA ligase (424 aa).

230-232 (TAE) is an L-serine binding site. 261-263 (RSE) provides a ligand contact to ATP. Residue E284 participates in L-serine binding. 348 to 351 (EISS) serves as a coordination point for ATP. S384 contributes to the L-serine binding site.

It belongs to the class-II aminoacyl-tRNA synthetase family. Type-1 seryl-tRNA synthetase subfamily. In terms of assembly, homodimer. The tRNA molecule binds across the dimer.

The protein localises to the cytoplasm. It carries out the reaction tRNA(Ser) + L-serine + ATP = L-seryl-tRNA(Ser) + AMP + diphosphate + H(+). The enzyme catalyses tRNA(Sec) + L-serine + ATP = L-seryl-tRNA(Sec) + AMP + diphosphate + H(+). The protein operates within aminoacyl-tRNA biosynthesis; selenocysteinyl-tRNA(Sec) biosynthesis; L-seryl-tRNA(Sec) from L-serine and tRNA(Sec): step 1/1. Functionally, catalyzes the attachment of serine to tRNA(Ser). Is also able to aminoacylate tRNA(Sec) with serine, to form the misacylated tRNA L-seryl-tRNA(Sec), which will be further converted into selenocysteinyl-tRNA(Sec). In Nitratidesulfovibrio vulgaris (strain ATCC 29579 / DSM 644 / CCUG 34227 / NCIMB 8303 / VKM B-1760 / Hildenborough) (Desulfovibrio vulgaris), this protein is Serine--tRNA ligase.